The chain runs to 228 residues: MALFPRGFYGSYGSDPSFTNLFRLLDDFDTYTREVQGSAPETGSRRHTQPTRTFSPKFDVRETEQTYELHGELPGIDRDNVQIEFTDPQTIVIRGRVERNYTAGTPPAQVAGVLTEKGEPHSPAAHHATVEDDVDEDNRSVATTATGANNQNNQQVAQRASAPTTEEKPKAPAEKYWVSERSIGEFSRTFNFPGRVDQNAVSASLNNGILTITVPKAKKHETIRIAIN.

Disordered stretches follow at residues 34 to 53 (EVQGSAPETGSRRHTQPTRT), 117 to 136 (KGEPHSPAAHHATVEDDVDE), and 144 to 174 (TATGANNQNNQQVAQRASAPTTEEKPKAPAE). Residues 49–228 (QPTRTFSPKF…KHETIRIAIN (180 aa)) enclose the sHSP domain. Positions 144-158 (TATGANNQNNQQVAQ) are enriched in low complexity.

This sequence belongs to the small heat shock protein (HSP20) family.

It is found in the cytoplasm. This chain is 30 kDa heat shock protein (hsp30), found in Neurospora crassa (strain ATCC 24698 / 74-OR23-1A / CBS 708.71 / DSM 1257 / FGSC 987).